Consider the following 340-residue polypeptide: DNA-directed RNA polymerase subunit alpha (340 aa).

The tract at residues 1–233 (MIQNEIPIPA…NLFIPLLHEK (233 aa)) is alpha N-terminal domain (alpha-NTD). An alpha C-terminal domain (alpha-CTD) region spans residues 263–340 (RKEISFKHIF…LPKNKFSIND (78 aa)).

This sequence belongs to the RNA polymerase alpha chain family. In plastids the minimal PEP RNA polymerase catalytic core is composed of four subunits: alpha, beta, beta', and beta''. When a (nuclear-encoded) sigma factor is associated with the core the holoenzyme is formed, which can initiate transcription.

Its subcellular location is the plastid. It localises to the chloroplast. The catalysed reaction is RNA(n) + a ribonucleoside 5'-triphosphate = RNA(n+1) + diphosphate. DNA-dependent RNA polymerase catalyzes the transcription of DNA into RNA using the four ribonucleoside triphosphates as substrates. The sequence is that of DNA-directed RNA polymerase subunit alpha (rpoA) from Anthoceros angustus (Hornwort).